The following is a 217-amino-acid chain: Resolvase homolog YneB (217 aa).

Positions 2–147 (KALIYARVST…RGMKRAVKNG (146 aa)) constitute a Resolvase/invertase-type recombinase catalytic domain. Ser10 serves as the catalytic O-(5'-phospho-DNA)-serine intermediate.

This sequence belongs to the site-specific recombinase resolvase family.

In Bacillus subtilis (strain 168), this protein is Resolvase homolog YneB (yneB).